Consider the following 89-residue polypeptide: Cell division topological specificity factor (89 aa).

It belongs to the MinE family.

Functionally, prevents the cell division inhibition by proteins MinC and MinD at internal division sites while permitting inhibition at polar sites. This ensures cell division at the proper site by restricting the formation of a division septum at the midpoint of the long axis of the cell. This is Cell division topological specificity factor from Klebsiella pneumoniae subsp. pneumoniae (strain ATCC 700721 / MGH 78578).